Here is a 402-residue protein sequence, read N- to C-terminus: Arginine deiminase (402 aa).

Cys-392 acts as the Amidino-cysteine intermediate in catalysis.

The protein belongs to the arginine deiminase family.

It localises to the cytoplasm. The enzyme catalyses L-arginine + H2O = L-citrulline + NH4(+). The protein operates within amino-acid degradation; L-arginine degradation via ADI pathway; carbamoyl phosphate from L-arginine: step 1/2. The polypeptide is Arginine deiminase (Mycobacterium avium (strain 104)).